A 908-amino-acid chain; its full sequence is Transcriptional repressor ILP1 (908 aa).

Disordered stretches follow at residues 1–113 (MGSN…PQAG) and 238–277 (VGPR…EEDK). The segment covering 25-47 (ATPSSKPTSTLSSSKPKTLSASA) has biased composition (low complexity). Positions 426–453 (MQNKGSLIEEIEDQMKELNEKHALSILE) form a coiled coil. The span at 513–530 (EFGRDENLQKRREVEQRA) shows a compositional bias: basic and acidic residues. Residues 513-574 (EFGRDENLQK…ESDTETSAYK (62 aa)) are disordered.

It belongs to the GCF family. Interacts with STIPL1/NTR1.

Its subcellular location is the nucleus. Transcriptional repressor regulating endoreduplication through control of A-type cyclins expression. Does not bind to promoter sequences (in vitro) and may act by interacting with tissue-specific transcription factors. Enhances the endocycle in endoreduplicating cells in seedlings. Required for efficient splicing. The sequence is that of Transcriptional repressor ILP1 from Arabidopsis thaliana (Mouse-ear cress).